We begin with the raw amino-acid sequence, 111 residues long: Secreted RxLR effector protein 81 (111 aa).

Positions 1-16 (MLVSMLLIIFPNGVSL) are cleaved as a signal peptide. An N-linked (GlcNAc...) asparagine glycan is attached at Asn-52. The interval 73–92 (KKFSSSDEDKSRDVRRRLRP) is disordered. A RxLR-dEER motif is present at residues 88 to 91 (RRLR).

It belongs to the RxLR effector family.

It is found in the secreted. The protein localises to the host nucleus. The protein resides in the host cytoplasm. Its function is as follows. Secreted effector that partially suppresses the host cell death induced by cell death-inducing proteins. This Plasmopara viticola (Downy mildew of grapevine) protein is Secreted RxLR effector protein 81.